Consider the following 339-residue polypeptide: MTVEMNKSIVKAYSVLETGEPLPFDVAVELAHLAGEDVPDLLSLANKVKNRYATLSEGALHSCSIINAKSGVCAENCRFCAQSLHNSADVEQYSLLDAEAIVRSAGDVYDEGIRHFGVVTSGYGYRKVNPEFLKIVAIIDQLRQEYPDLNVCASLGILGEEPVRMLAEHNVRHYNINIQVAPDRYSDLIADSHPLKDRIDTIRLLRKYGIPVCCGGILGVGETMRERLDFIYALQELDIAVIPLNVLVPIEGTPLQGAATPALTDIVKTFALCRLVHPGKIIKFAAGRETVMNDFQGLLMLAGANGFLTGGYLTTRGRKIGDDREFMRQLAGFAEVSCS.

Positions 55–288 constitute a Radical SAM core domain; that stretch reads LSEGALHSCS…GKIIKFAAGR (234 aa). [4Fe-4S] cluster is bound by residues Cys73, Cys77, and Cys80. [2Fe-2S] cluster contacts are provided by Cys152, Cys213, and Lys283.

It belongs to the radical SAM superfamily. Biotin synthase family. As to quaternary structure, homodimer. The cofactor is [4Fe-4S] cluster. [2Fe-2S] cluster serves as cofactor.

The enzyme catalyses (4R,5S)-dethiobiotin + (sulfur carrier)-SH + 2 reduced [2Fe-2S]-[ferredoxin] + 2 S-adenosyl-L-methionine = (sulfur carrier)-H + biotin + 2 5'-deoxyadenosine + 2 L-methionine + 2 oxidized [2Fe-2S]-[ferredoxin]. Its pathway is cofactor biosynthesis; biotin biosynthesis; biotin from 7,8-diaminononanoate: step 2/2. In terms of biological role, catalyzes the conversion of dethiobiotin (DTB) to biotin by the insertion of a sulfur atom into dethiobiotin via a radical-based mechanism. This Chlorobium phaeobacteroides (strain BS1) protein is Biotin synthase.